The following is a 230-amino-acid chain: Thymidylate kinase (230 aa).

Position 23–30 (23–30 (GIDGAGKT)) interacts with ATP.

This sequence belongs to the thymidylate kinase family.

The catalysed reaction is dTMP + ATP = dTDP + ADP. Its function is as follows. Phosphorylation of dTMP to form dTDP in both de novo and salvage pathways of dTTP synthesis. The sequence is that of Thymidylate kinase from Ureaplasma parvum serovar 3 (strain ATCC 27815 / 27 / NCTC 11736).